Reading from the N-terminus, the 356-residue chain is Heme A synthase (356 aa).

5 consecutive transmembrane segments (helical) span residues 24-44, 106-126, 139-159, 174-194, and 214-234; these read IAIW…VGGV, FHRL…VYFM, LLGI…MVMS, AHLG…TGLI, and AWML…VAGI. His-276 contacts heme. 3 consecutive transmembrane segments (helical) span residues 278–298, 309–329, and 331–351; these read LIAW…KQLS, LLLL…LLSV, and LTFA…ALWV. A heme-binding site is contributed by His-337.

It belongs to the COX15/CtaA family. Type 2 subfamily. Interacts with CtaB. Heme b serves as cofactor.

It localises to the cell membrane. The enzyme catalyses Fe(II)-heme o + 2 A + H2O = Fe(II)-heme a + 2 AH2. Its pathway is porphyrin-containing compound metabolism; heme A biosynthesis; heme A from heme O: step 1/1. Its function is as follows. Catalyzes the conversion of heme O to heme A by two successive hydroxylations of the methyl group at C8. The first hydroxylation forms heme I, the second hydroxylation results in an unstable dihydroxymethyl group, which spontaneously dehydrates, resulting in the formyl group of heme A. The protein is Heme A synthase of Nitrosomonas eutropha (strain DSM 101675 / C91 / Nm57).